A 170-amino-acid chain; its full sequence is Flavodoxin (170 aa).

The Flavodoxin-like domain maps to isoleucine 4–lysine 165.

This sequence belongs to the flavodoxin family. It depends on FMN as a cofactor.

Low-potential electron donor to a number of redox enzymes. The polypeptide is Flavodoxin (isiB) (Synechocystis sp. (strain ATCC 27184 / PCC 6803 / Kazusa)).